The sequence spans 215 residues: Pyrrolidone-carboxylate peptidase (215 aa).

Catalysis depends on residues Glu78, Cys141, and His165.

Belongs to the peptidase C15 family. In terms of assembly, homotetramer.

The protein localises to the cytoplasm. The catalysed reaction is Release of an N-terminal pyroglutamyl group from a polypeptide, the second amino acid generally not being Pro.. In terms of biological role, removes 5-oxoproline from various penultimate amino acid residues except L-proline. The protein is Pyrrolidone-carboxylate peptidase of Lacticaseibacillus paracasei (strain ATCC 334 / BCRC 17002 / CCUG 31169 / CIP 107868 / KCTC 3260 / NRRL B-441) (Lactobacillus paracasei).